The chain runs to 395 residues: Leucine aminopeptidase 1 (395 aa).

The signal sequence occupies residues 1-19 (MKHLSLLALAAVAPTTALA). Residues 20–95 (GVIDHQQVTF…SVKSFEQTKV (76 aa)) constitute a propeptide that is removed on maturation. Residue asparagine 187 is glycosylated (N-linked (GlcNAc...) asparagine). The Zn(2+) site is built by histidine 195, aspartate 214, glutamate 253, and aspartate 280. Residues cysteine 329 and cysteine 333 are joined by a disulfide bond. Histidine 362 lines the Zn(2+) pocket.

Belongs to the peptidase M28 family. M28E subfamily. In terms of assembly, monomer. It depends on Zn(2+) as a cofactor.

It is found in the secreted. Its function is as follows. Extracellular aminopeptidase that allows assimilation of proteinaceous substrates. The protein is Leucine aminopeptidase 1 (LAP1) of Uncinocarpus reesii (strain UAMH 1704).